Consider the following 421-residue polypeptide: MKFTLAASGSRGDVEPFAALGLELQRRGHEVRIGVPPDMLRFVESAGLAAVAYGPDTQEFLARDTYSQWRQWWKILPPIKALQQLRQAWADMATDLKSLADGADLVMTGVVYQGVVANVAEYYGIPFGVLHFVPARVNGKIIPSLPSPLNRAILATVWRAHWLLAKKPEDAQRRELGLPKATSLSTRRIVKRGALEIQAYDELCFPGLAAEWAEYGDRRPFVGALTLELPTAADNEVLSWIAAGTPPIYFGFGSMPIVSPTDTVAMIAAACADLGERALISVKPKDLTQVPKFDHVKIVTSVSHAAVFPACRAVVHHGGAGTTAASLRAGVPTLILWIFIEQPVWAAQIKRLKVGAGRRFSATTQRSLAADLRTILAPQYATRAREVANRMSKPDESVNAAADLLEDKASRNKSRTRYQDC.

The protein belongs to the glycosyltransferase 28 family.

This is an uncharacterized protein from Mycobacterium leprae (strain TN).